Here is a 117-residue protein sequence, read N- to C-terminus: Large ribosomal subunit protein bL19 (117 aa).

The protein belongs to the bacterial ribosomal protein bL19 family.

Its function is as follows. This protein is located at the 30S-50S ribosomal subunit interface and may play a role in the structure and function of the aminoacyl-tRNA binding site. The protein is Large ribosomal subunit protein bL19 of Vibrio cholerae serotype O1 (strain ATCC 39541 / Classical Ogawa 395 / O395).